Consider the following 125-residue polypeptide: Cytochrome c2 (125 aa).

The first 21 residues, 1 to 21, serve as a signal peptide directing secretion; that stretch reads MKAIKIAMVGAALVWSASAYA. In terms of domain architecture, Cytochrome c spans 23 to 123; sequence GDPVKGEQVF…DVIAFLATQH (101 aa). Residues C35, C38, H39, and M101 each coordinate heme c.

The protein belongs to the cytochrome c family. In terms of processing, binds 1 heme c group covalently per subunit.

Functionally, cytochrome c2 is found mainly in purple, non-sulfur, photosynthetic bacteria where it functions as the electron donor to the oxidized bacteriochlorophyll in the photophosphorylation pathway. However, it may also have a role in the respiratory chain and is found in some non-photosynthetic bacteria. The protein is Cytochrome c2 of Rhodomicrobium vannielii (strain ATCC 17100 / DSM 162 / LMG 4299 / NCIMB 10020 / ATH 3.1.1).